The chain runs to 567 residues: Geranylgeranyl transferase type-2 subunit alpha (567 aa).

PFTA repeat units follow at residues 44–78 (LDESVLELTSQILGANPDFATLWNCRREVLQRLEV), 88–122 (LVKAELGFLESCLRVNPKSYGTWHHRCWLLGRLPE), 124–158 (NWARELELCARFLEVDERNFHCWDYRRFVASQAAV), 159–193 (PPAEELAFTDSLITRNFSNYSSWHYRSCLLPQLHP), 207–241 (VLLKELELVQNAFFTDPNDQSAWFYHRWLLGRADP), and 363–397 (VLQSELESCKELQELEPENKWCLLTIILLMRALDP). Ser-98 carries the post-translational modification Phosphoserine. LRR repeat units lie at residues 442–463 (DVRVLHLGHKDLTVLCHLEQLL), 464–486 (LVTHLDLSHNRLRALPPALAALR), 487–508 (CLEVLQANDNAIESLDGVTNLP), 509–530 (RLQELSLCNNRLQQPAVLQPLA), and 534–555 (RLVLLNLQDNPLCQAVGISEHL).

Belongs to the protein prenyltransferase subunit alpha family. As to quaternary structure, heterotrimer composed of RABGGTA, RABGGTB and CHM; within this trimer, RABGGTA and RABGGTB form the catalytic component B, while CHM (component A) mediates peptide substrate binding. The Rab GGTase dimer (RGGT) interacts with CHM (component A) prior to Rab protein binding; the association is stabilized by geranylgeranyl pyrophosphate (GGpp). The CHM:RGGT:Rab complex is destabilized by GGpp. Interacts with non-phosphorylated form of RAB8A; phosphorylation of RAB8A disrupts this interaction.

The enzyme catalyses geranylgeranyl diphosphate + L-cysteinyl-[protein] = S-geranylgeranyl-L-cysteinyl-[protein] + diphosphate. Its activity is regulated as follows. The enzymatic reaction requires the aid of a Rab escort protein (also called component A), such as CHM. Catalyzes the transfer of a geranylgeranyl moiety from geranylgeranyl diphosphate to both cysteines of Rab proteins with the C-terminal sequence -XXCC, -XCXC and -CCXX, such as RAB1A, RAB3A, RAB5A and RAB7A. This is Geranylgeranyl transferase type-2 subunit alpha (RABGGTA) from Sus scrofa (Pig).